Here is a 1320-residue protein sequence, read N- to C-terminus: Clustered mitochondria protein homolog (1320 aa).

Disordered stretches follow at residues 166-241 (QQLE…KQKM), 552-582 (YGSMDTPTNEEEEQQQKEENEENKNNNTKSI), and 683-708 (LKEKEERQKKEGIDPPTATARDEDVQ). A compositionally biased stretch (basic and acidic residues) spans 185–194 (TEDKEEKETI). The span at 202 to 213 (KKNKHHNKKGNK) shows a compositional bias: basic residues. Basic and acidic residues-rich tracts occupy residues 226 to 241 (NEEKLTPQQKERKQKM), 565 to 575 (QQQKEENEENK), and 683 to 695 (LKEKEERQKKEGI). Positions 379 to 649 (KTNRYDINKG…KATPRDPNYT (271 aa)) constitute a Clu domain. TPR repeat units lie at residues 955–988 (GLDLLEAGKTFFNQRKYELATELLGEALAIYHQV), 997–1030 (GACFTHLAMLAYQNEQYDLAIEYQKNALVITEKT), 1039–1072 (VQAYTTLAVFCQRSGRYNESIGYMKHVLYLTDLL), 1081–1114 (ASIYTAIAAILEDTERFDLALEFLKQTLKHQEFL), and 1123–1156 (STTYHKMAIVCARATNFDDSIIHQKKSTDILEKE). The segment at 1204-1320 (KADQFKKSQP…SKPNKKSSKN (117 aa)) is disordered. The span at 1237–1247 (KPKKSQSKKSK) shows a compositional bias: basic residues. The span at 1248–1311 (STNTTTTTNT…PTSSSAADSS (64 aa)) shows a compositional bias: low complexity.

This sequence belongs to the CLU family.

Its subcellular location is the cytoplasm. MRNA-binding protein involved in proper cytoplasmic distribution of mitochondria. The protein is Clustered mitochondria protein homolog of Dictyostelium discoideum (Social amoeba).